Reading from the N-terminus, the 101-residue chain is Glutenin, high molecular weight subunit PC256 (101 aa).

The span at 1-27 (EKLGQGQQPRQWLQPRQGQQGYYPTSP) shows a compositional bias: polar residues. A disordered region spans residues 1–65 (EKLGQGQQPR…QGYDSPYHVS (65 aa)). Residues 41–62 (QGYYPTSPQQSGQGQQGYDSPY) are compositionally biased toward low complexity.

This sequence belongs to the gliadin/glutenin family. Disulfide-bridge linked aggregates.

Its function is as follows. Glutenins are high-molecular weight seed storage proteins of wheat endosperm. Thought to be responsible for the visco-elastic property of wheat dough. The protein is Glutenin, high molecular weight subunit PC256 of Triticum aestivum (Wheat).